Here is a 469-residue protein sequence, read N- to C-terminus: COP9 signalosome complex subunit 5 (469 aa).

In terms of domain architecture, MPN spans 63–200 (TYISSLALCK…IGAFRTFPDN (138 aa)). Zn(2+) contacts are provided by H146, H148, and D159. Residues 146 to 159 (HSHPGYGCWLSGID) carry the JAMM motif motif. Disordered regions lie at residues 201 to 220 (YKSP…PPSK) and 331 to 404 (YDSF…KRPM). A compositionally biased stretch (acidic residues) spans 344–353 (DEMDDESDLD).

Belongs to the peptidase M67A family. CSN5 subfamily. Component of the COP9 signalosome (CSN) complex.

It localises to the cytoplasm. It is found in the nucleus. Catalytic Component of the COP9 signalosome (CSN) complex that acts as an regulator of the ubiquitin (Ubl) conjugation pathway by mediating the deneddylation of the cullin subunit of SCF-type E3 ubiquitin-protein ligase complexes. The CSN complex is involved in the regulation of the mating pheromone response. This Debaryomyces hansenii (strain ATCC 36239 / CBS 767 / BCRC 21394 / JCM 1990 / NBRC 0083 / IGC 2968) (Yeast) protein is COP9 signalosome complex subunit 5 (RRI1).